The primary structure comprises 660 residues: Arginine--tRNA ligase, cytoplasmic (660 aa).

M1 bears the N-acetylmethionine mark. The interval 1–72 (MDALVAHCSA…QAERNKPTKT (72 aa)) is could be involved in the assembly of the multisynthetase complex. Residues 200-202 (SPN), H211, Y384, D388, and Q412 contribute to the L-arginine site. The 'HIGH' region motif lies at 201 to 212 (PNIAKEMHVGHL). The interaction with tRNA stretch occupies residues 529-543 (NTAAYLLYAFTRIRS).

It belongs to the class-I aminoacyl-tRNA synthetase family. As to quaternary structure, interacts (via N-terminus) with AIMP1 (via N-terminus); this stimulates its catalytic activity. Interacts (via N-terminus) with LARS2 (via C-terminus). Monomer. Part of a multisubunit complex that groups tRNA ligases for Arg (RARS1), Asp (DARS1), Gln (QARS1), Ile (IARS1), Leu (LARS1), Lys (KARS1), Met (MARS1) the bifunctional ligase for Glu and Pro (EPRS1) and the auxiliary subunits AIMP1/p43, AIMP2/p38 and EEF1E1/p18. Interacts with QARS1. Part of a complex composed of RARS1, QARS1 and AIMP1.

It localises to the cytoplasm. It is found in the cytosol. It catalyses the reaction tRNA(Arg) + L-arginine + ATP = L-arginyl-tRNA(Arg) + AMP + diphosphate. Forms part of a macromolecular complex that catalyzes the attachment of specific amino acids to cognate tRNAs during protein synthesis. Modulates the secretion of AIMP1 and may be involved in generation of the inflammatory cytokine EMAP2 from AIMP1. The chain is Arginine--tRNA ligase, cytoplasmic (RARS1) from Bos taurus (Bovine).